The chain runs to 123 residues: Small ribosomal subunit protein uS11 (123 aa).

The protein belongs to the universal ribosomal protein uS11 family. Part of the 30S ribosomal subunit. Interacts with proteins S7 and S18. Binds to IF-3.

Its function is as follows. Located on the platform of the 30S subunit, it bridges several disparate RNA helices of the 16S rRNA. Forms part of the Shine-Dalgarno cleft in the 70S ribosome. This Coxiella burnetii (strain CbuG_Q212) (Coxiella burnetii (strain Q212)) protein is Small ribosomal subunit protein uS11.